Reading from the N-terminus, the 259-residue chain is Deoxyribose-phosphate aldolase (259 aa).

The active-site Proton donor/acceptor is Asp-102. Lys-167 functions as the Schiff-base intermediate with acetaldehyde in the catalytic mechanism. Residue Lys-201 is the Proton donor/acceptor of the active site.

The protein belongs to the DeoC/FbaB aldolase family. DeoC type 2 subfamily.

It localises to the cytoplasm. It catalyses the reaction 2-deoxy-D-ribose 5-phosphate = D-glyceraldehyde 3-phosphate + acetaldehyde. The protein operates within carbohydrate degradation; 2-deoxy-D-ribose 1-phosphate degradation; D-glyceraldehyde 3-phosphate and acetaldehyde from 2-deoxy-alpha-D-ribose 1-phosphate: step 2/2. Its function is as follows. Catalyzes a reversible aldol reaction between acetaldehyde and D-glyceraldehyde 3-phosphate to generate 2-deoxy-D-ribose 5-phosphate. This is Deoxyribose-phosphate aldolase from Cronobacter sakazakii (strain ATCC BAA-894) (Enterobacter sakazakii).